The following is a 307-amino-acid chain: Aspartate carbamoyltransferase catalytic subunit (307 aa).

2 residues coordinate carbamoyl phosphate: Arg58 and Thr59. Position 86 (Lys86) interacts with L-aspartate. 3 residues coordinate carbamoyl phosphate: Arg108, His136, and Gln139. L-aspartate-binding residues include Arg169 and Arg223. 2 residues coordinate carbamoyl phosphate: Gly264 and Pro265.

The protein belongs to the aspartate/ornithine carbamoyltransferase superfamily. ATCase family. As to quaternary structure, heterododecamer (2C3:3R2) of six catalytic PyrB chains organized as two trimers (C3), and six regulatory PyrI chains organized as three dimers (R2).

It catalyses the reaction carbamoyl phosphate + L-aspartate = N-carbamoyl-L-aspartate + phosphate + H(+). It functions in the pathway pyrimidine metabolism; UMP biosynthesis via de novo pathway; (S)-dihydroorotate from bicarbonate: step 2/3. Functionally, catalyzes the condensation of carbamoyl phosphate and aspartate to form carbamoyl aspartate and inorganic phosphate, the committed step in the de novo pyrimidine nucleotide biosynthesis pathway. This chain is Aspartate carbamoyltransferase catalytic subunit, found in Moorella thermoacetica (strain ATCC 39073 / JCM 9320).